Reading from the N-terminus, the 153-residue chain is MKTLILHICIFALVAFASASRDSAKKIGSQYDNYETCLTELSVTEDELFSIGEVTSGQHKTNHEDTELHKNGCVMQCMLEKDGLMTGADYDEEKMREDYIKETGAQPGDQRVEALNACMQETKDLEDKCDKSLILVACVLAAEAVLADSSEGA.

An N-terminal signal peptide occupies residues 1–19 (MKTLILHICIFALVAFASA). Cystine bridges form between C37/C77, C73/C129, and C118/C138.

It belongs to the PBP/GOBP family. As to quaternary structure, homodimer.

The protein localises to the secreted. Its function is as follows. Colony queen number, a major feature of social organization, is associated with worker genotype for Gp-9. Colonies are headed by either a single reproductive queen (monogyne form) or multiple queens (polygyne form). Differences in worker Gp-9 genotypes between social forms may cause differences in workers' abilities to recognize queens and regulate their numbers. The polypeptide is Pheromone-binding protein Gp-9 (Solenopsis nigella gensterblumi (Fire ant)).